Consider the following 1172-residue polypeptide: Serine/threonine-protein kinase Nek10 (1172 aa).

An ARM repeat occupies 209–251; it reads GAHKTLVNLLGARDTNVLLGSLLALASLAESQECREKISELNI. A coiled-coil region spans residues 481-514; the sequence is YEELVSKLNLLVEDELKQIAENIESINQNKAPLK. A Protein kinase domain is found at 519–712; the sequence is YAILDHLGSG…SEPYGEKADV (194 aa). Residues 525–533 and Lys-548 each bind ATP; that span reads LGSGAFGCV. Asp-655 serves as the catalytic Proton acceptor. Disordered regions lie at residues 855–875 and 898–954; these read SELS…YGKD and TYSE…GSRP. Positions 919–945 are enriched in polar residues; the sequence is PLKESTFNILKRSFSASGGERQSQTRD.

It belongs to the protein kinase superfamily. NEK Ser/Thr protein kinase family. NIMA subfamily. In terms of assembly, interacts with RAF1 and MAP2K1; the interaction is direct with RAF1 and required for ERK1/2-signaling pathway activation in response to UV irradiation. Mg(2+) is required as a cofactor. Expressed in the lung.

The enzyme catalyses L-seryl-[protein] + ATP = O-phospho-L-seryl-[protein] + ADP + H(+). It carries out the reaction L-threonyl-[protein] + ATP = O-phospho-L-threonyl-[protein] + ADP + H(+). Its function is as follows. Plays a role in the cellular response to UV irradiation. Mediates G2/M cell cycle arrest, MEK autoactivation and ERK1/2-signaling pathway activation in response to UV irradiation. In ciliated cells of airways, it is involved in the regulation of mucociliary transport. This chain is Serine/threonine-protein kinase Nek10, found in Homo sapiens (Human).